Consider the following 649-residue polypeptide: Transcription factor E2-alpha (649 aa).

4 disordered regions span residues 37 to 107 (RPAS…SERN), 132 to 207 (GLSS…AKTP), 296 to 325 (TYSG…SSSG), and 339 to 376 (DHSS…ALSP). A compositionally biased stretch (polar residues) spans 57–71 (SESWGNSEQNSSSFD). Over residues 132–148 (GLSSPGPLSPSGVKSSS) the composition is skewed to low complexity. S135 and S140 each carry phosphoserine. Positions 171-177 (PKKVRKV) match the Nuclear localization signal motif. Residues 339-352 (DHSSNNFSPSPSTP) are compositionally biased toward low complexity. T351 carries the phosphothreonine modification. Position 355 is a phosphoserine (S355). The residue at position 367 (R367) is an Omega-N-methylarginine. Phosphoserine is present on S375. Residues 385–420 (LSKMEDRLDEAIHVLRSHAVGTASELHGLLPGHSTL) are leucine-zipper. The disordered stretch occupies residues 435 to 547 (AGLVSGSHPE…KAEREKERRV (113 aa)). The segment covering 459–477 (SLPSQPSSLPDLSQRPPDS) has biased composition (low complexity). K494 participates in a covalent cross-link: Glycyl lysine isopeptide (Lys-Gly) (interchain with G-Cter in SUMO2). S524 carries the phosphoserine modification. At D526 the chain carries Phosphothreonine. Positions 537–547 (QKAEREKERRV) are enriched in basic and acidic residues. The bHLH domain occupies 544 to 597 (ERRVANNARERLRVRDINEAFKELGRMCQLHLSTEKPQTKLLILHQAVAVILSL). A Glycyl lysine isopeptide (Lys-Gly) (interchain with G-Cter in SUMO2) cross-link involves residue K620.

In terms of assembly, homodimer. Heterodimer; efficient DNA binding requires dimerization with another bHLH protein. Forms a heterodimer with TWIST1 and TWIST2. Forms a heterodimer with NEUROD1; the heterodimer is inhibited in presence of ID2, but not NR0B2, to E-box element. Forms a heterodimer with TCF15; the heterodimer binds E-box element. Forms a heterodimer with MYOG; heterodimerization enhances MYOG DNA-binding and transcriptional activities. Forms a heterodimer with ATOH8; repress transcription of TCF3 and TCF3-NEUROG3 dimer-induced transactivation of E box-dependent promoters. Component of a nuclear TAL-1 complex composed at least of CBFA2T3, LDB1, TAL1 and TCF3. Interacts with NEUROD2. Interacts with EP300. Interacts with PTF1A, TGFB1I1. Interacts with UBE2I. Interacts with BHLHA9. Interacts with ASB2; the interaction is mediated by SKP2 and targets TCF3 for Notch-induced proteasomal degradation. Interacts with transcription factor ASCL5/AmeloD. As to quaternary structure, interacts with RALGAPA1. Interacts with FIGLA. Forms a heterodimer with ATOH7; required for ATOH7 DNA-binding. Post-translationally, phosphorylated following NGF stimulation. Undergoes Notch-induced ubiquitination and subsequent proteasomal degradation which is mediated by ASB1 or ASB2, the substrate-recognition components of probable ECS E3 ubiquitin-protein ligase complexes.

The protein resides in the nucleus. In terms of biological role, transcriptional regulator involved in the initiation of neuronal differentiation and mesenchymal to epithelial transition. Heterodimers between TCF3 and tissue-specific basic helix-loop-helix (bHLH) proteins play major roles in determining tissue-specific cell fate during embryogenesis, like muscle or early B-cell differentiation. Together with TCF15, required for the mesenchymal to epithelial transition. Dimers bind DNA on E-box motifs: 5'-CANNTG-3'. Binds to the kappa-E2 site in the kappa immunoglobulin gene enhancer. Binds to the consensus sequence CAC/GCTGT/C present, in the chymotrypsin, insulin, AP-4, and several other gene enhancer motifs. Its function is as follows. Facilitates ATOH7 binding to DNA at the consensus sequence 5'-CAGGTG-3', and positively regulates transcriptional activity. The polypeptide is Transcription factor E2-alpha (Tcf3) (Rattus norvegicus (Rat)).